Consider the following 320-residue polypeptide: GDP-L-fucose synthase (320 aa).

Position 14-20 (14-20 (GGSGLVG)) interacts with NADP(+). Tyrosine 142 (proton donor/acceptor) is an active-site residue. NADP(+) is bound by residues lysine 146, 169–172 (PTNI), and histidine 185. Substrate contacts are provided by lysine 193, arginine 214, and aspartate 276.

Belongs to the NAD(P)-dependent epimerase/dehydratase family. Fucose synthase subfamily.

It carries out the reaction GDP-beta-L-fucose + NADP(+) = GDP-4-dehydro-alpha-D-rhamnose + NADPH + H(+). It participates in nucleotide-sugar biosynthesis; GDP-L-fucose biosynthesis via de novo pathway; GDP-L-fucose from GDP-alpha-D-mannose: step 2/2. Its function is as follows. Catalyzes the two-step NADP-dependent conversion of GDP-4-dehydro-6-deoxy-D-mannose to GDP-fucose, involving an epimerase and a reductase reaction. This is GDP-L-fucose synthase (ger) from Dictyostelium discoideum (Social amoeba).